A 100-amino-acid chain; its full sequence is EKC/KEOPS complex subunit GON7 (100 aa).

N-acetylmethionine is present on Met-1. The interval Ala-61 to Ser-100 is disordered. Positions Pro-64–Asn-81 are enriched in acidic residues.

Component of the EKC/KEOPS complex composed of at least GON7, TP53RK, TPRKB, OSGEP and LAGE3; the whole complex dimerizes.

It is found in the nucleus. Its function is as follows. Component of the EKC/KEOPS complex that is required for the formation of a threonylcarbamoyl group on adenosine at position 37 (t(6)A37) in tRNAs that read codons beginning with adenine. The complex is probably involved in the transfer of the threonylcarbamoyl moiety of threonylcarbamoyl-AMP (TC-AMP) to the N6 group of A37. GON7 plays a supporting role to the catalytic subunit OSGEP in the complex. In Homo sapiens (Human), this protein is EKC/KEOPS complex subunit GON7.